Here is a 376-residue protein sequence, read N- to C-terminus: MEENSIKIHKWLYPASWLYGAGVALRNKLFDWGKLQSKSFNVPIICIGNIAVGGTGKTPHTEYLIKLLHDEFQVAVLSRGYKRHTKGFVLSTAESDARSIGDEPYQIQSKFSDIRVAVDEDRCHGIERLLTLKEPPVEVILLDDAFQHRYVKAGLNILLTDYHRLFCDDTLMPAGRLRESAQGKNRAQIVIVTKCPPDIKPIDYNIITKRLNLFPYQQLYFSSFRYGNLRAVFPDCATVQERKLSSLQTEEQILLITGIASPDTIIRELEIHTRNIDLLAFSDHHNFSQRDLAQIKERFGKLRKGQRLIVTTEKDATRLICHQELDEGLKPFIYALPIEVEILQNQQDNFNQHIIGYVRENTRNGSLPERKDAHKS.

51-58 (AVGGTGKT) lines the ATP pocket.

Belongs to the LpxK family.

The enzyme catalyses a lipid A disaccharide + ATP = a lipid IVA + ADP + H(+). It participates in glycolipid biosynthesis; lipid IV(A) biosynthesis; lipid IV(A) from (3R)-3-hydroxytetradecanoyl-[acyl-carrier-protein] and UDP-N-acetyl-alpha-D-glucosamine: step 6/6. Its function is as follows. Transfers the gamma-phosphate of ATP to the 4'-position of a tetraacyldisaccharide 1-phosphate intermediate (termed DS-1-P) to form tetraacyldisaccharide 1,4'-bis-phosphate (lipid IVA). The polypeptide is Tetraacyldisaccharide 4'-kinase (Bacteroides fragilis (strain YCH46)).